The primary structure comprises 199 residues: Chaperone protein TorD (199 aa).

The protein belongs to the TorD/DmsD family. TorD subfamily.

The protein resides in the cytoplasm. Its function is as follows. Involved in the biogenesis of TorA. Acts on TorA before the insertion of the molybdenum cofactor and, as a result, probably favors a conformation of the apoenzyme that is competent for acquiring the cofactor. This is Chaperone protein TorD from Escherichia coli (strain ATCC 8739 / DSM 1576 / NBRC 3972 / NCIMB 8545 / WDCM 00012 / Crooks).